A 67-amino-acid chain; its full sequence is UPF0434 protein Bphy_0537 (67 aa).

This sequence belongs to the UPF0434 family.

This chain is UPF0434 protein Bphy_0537, found in Paraburkholderia phymatum (strain DSM 17167 / CIP 108236 / LMG 21445 / STM815) (Burkholderia phymatum).